Reading from the N-terminus, the 290-residue chain is Membrane protein insertase YidC (290 aa).

Residues 1–19 (MKKKALLPLFLGIMVFLAG) form the signal peptide. A lipid anchor (N-palmitoyl cysteine) is attached at cysteine 20. Residue cysteine 20 is the site of S-diacylglycerol cysteine attachment. 5 helical membrane passes run 56–76 (YGLA…PFML), 134–154 (MLGC…YFVL), 176–196 (PDIW…YVSS), 207–224 (GYMM…ISLS), and 229–251 (LGLY…NIYY). Positions 270–290 (HNGGSNKKGKNTQVVSKKKKK) are disordered.

Belongs to the OXA1/ALB3/YidC family. Type 2 subfamily.

Its subcellular location is the cell membrane. Functionally, required for the insertion and/or proper folding and/or complex formation of integral membrane proteins into the membrane. Involved in integration of membrane proteins that insert both dependently and independently of the Sec translocase complex, as well as at least some lipoproteins. The chain is Membrane protein insertase YidC from Staphylococcus aureus (strain Mu3 / ATCC 700698).